The sequence spans 392 residues: Odorant receptor 9a (392 aa).

The Cytoplasmic portion of the chain corresponds to 1–41; that stretch reads MSDKVKGKKQEEKDQSLRVQILVYRCMGIDLWSPTMANDRP. A helical membrane pass occupies residues 42-62; the sequence is WLTFVTMGPLFLFMVPMFLAA. At 63-74 the chain is on the extracellular side; that stretch reads HEYITQVSLLSD. The chain crosses the membrane as a helical span at residues 75–95; that stretch reads TLGSTFASMLTLVKFLLFCYH. The Cytoplasmic portion of the chain corresponds to 96-141; that stretch reads RKEFVGLIYHIRAILAKEIEVWPDAREIIEVENQSDQMLSLTYTRC. Residues 142 to 162 form a helical membrane-spanning segment; the sequence is FGLAGIFAALKPFVGIILSSI. Residues 163 to 202 are Extracellular-facing; that stretch reads RGDEIHLELPHNGVYPYDLQVVMFYVPTYLWNVMASYSAV. A helical membrane pass occupies residues 203–223; the sequence is TMALCVDSLLFFFTYNVCAIF. At 224-268 the chain is on the cytoplasmic side; sequence KIAKHRMIHLPAVGGKEELEGLVQVLLLHQKGLQIADHIADKYRP. The chain crosses the membrane as a helical span at residues 269–289; that stretch reads LIFLQFFLSALQICFIGFQVA. Residues 290-297 lie on the Extracellular side of the membrane; sequence DLFPNPQS. The helical transmembrane segment at 298-318 threads the bilayer; it reads LYFIAFVGSLLIALFIYSKCG. Over 319–362 the chain is Cytoplasmic; it reads ENIKSASLDFGNGLYETNWTDFSPPTKRALLIAAMRAQRPCQMK. Residues 363–383 form a helical membrane-spanning segment; that stretch reads GYFFEASMATFSTIVRSAVSY. The Extracellular segment spans residues 384 to 392; sequence IMMLRSFNA.

This sequence belongs to the insect chemoreceptor superfamily. Heteromeric odorant receptor channel (TC 1.A.69) family. Or1a subfamily. Interacts with Orco. Complexes exist early in the endomembrane system in olfactory sensory neurons (OSNs), coupling these complexes to the conserved ciliary trafficking pathway. As to expression, expressed in olfactory sensory neurons in the antenna.

It is found in the cell membrane. Functionally, odorant receptor which mediates acceptance or avoidance behavior, depending on its substrates. The odorant receptor repertoire encodes a large collection of odor stimuli that vary widely in identity, intensity, and duration. May form a complex with Orco to form odorant-sensing units, providing sensitive and prolonged odorant signaling and calcium permeability. In Drosophila melanogaster (Fruit fly), this protein is Odorant receptor 9a (Or9a).